We begin with the raw amino-acid sequence, 404 residues long: Cytochrome b (404 aa).

4 helical membrane passes run 35-55 (FGSLAGLCLVIQILTGVFLAM), 79-101 (WLLRYMHANGASMFFIVVYLHFF), 116-136 (VWCLGVVILLLMIVTAFIGYV), and 182-202 (FFSLHYLLPFIIAGASILHLA). Histidine 85 and histidine 99 together coordinate heme b. 2 residues coordinate heme b: histidine 186 and histidine 200. Residue histidine 205 participates in a ubiquinone binding. 4 helical membrane passes run 228–248 (IYVKDLVGWVAFAIFFSIFVF), 292–312 (LGGVAAIGLVFVSLLALPFIN), 324–344 (IHQKFFWLLVADCLLLGWIGC), and 351–370 (YVTIGQIASVGFFFYFAITP).

Belongs to the cytochrome b family. The main subunits of complex b-c1 are: cytochrome b, cytochrome c1 and the Rieske protein. The cofactor is heme b.

The protein resides in the mitochondrion inner membrane. Its function is as follows. Component of the ubiquinol-cytochrome c reductase complex (complex III or cytochrome b-c1 complex) that is part of the mitochondrial respiratory chain. The b-c1 complex mediates electron transfer from ubiquinol to cytochrome c. Contributes to the generation of a proton gradient across the mitochondrial membrane that is then used for ATP synthesis. This Marchantia polymorpha (Common liverwort) protein is Cytochrome b (MT-CYB).